A 159-amino-acid chain; its full sequence is NADH-quinone oxidoreductase subunit I (159 aa).

2 4Fe-4S ferredoxin-type domains span residues 50 to 80 (QRRY…IESE) and 90 to 119 (KRYD…ETHI). The [4Fe-4S] cluster site is built by C60, C63, C66, C70, C99, C102, C105, and C109.

This sequence belongs to the complex I 23 kDa subunit family. NDH-1 is composed of 14 different subunits. Subunits NuoA, H, J, K, L, M, N constitute the membrane sector of the complex. The cofactor is [4Fe-4S] cluster.

It localises to the cell inner membrane. The enzyme catalyses a quinone + NADH + 5 H(+)(in) = a quinol + NAD(+) + 4 H(+)(out). Its function is as follows. NDH-1 shuttles electrons from NADH, via FMN and iron-sulfur (Fe-S) centers, to quinones in the respiratory chain. The immediate electron acceptor for the enzyme in this species is believed to be ubiquinone. Couples the redox reaction to proton translocation (for every two electrons transferred, four hydrogen ions are translocated across the cytoplasmic membrane), and thus conserves the redox energy in a proton gradient. This chain is NADH-quinone oxidoreductase subunit I, found in Neisseria meningitidis serogroup A / serotype 4A (strain DSM 15465 / Z2491).